The following is a 160-amino-acid chain: uncharacterized protein (160 aa).

An N-acetyltransferase domain is found at 9–151 (LLINYKTLEK…GENPLIWLPE (143 aa)).

This is an uncharacterized protein from Oceanobacillus iheyensis (strain DSM 14371 / CIP 107618 / JCM 11309 / KCTC 3954 / HTE831).